The primary structure comprises 355 residues: MHERRLNILLRPAALLYGLVAAVRNALFDRGMLKAWKSPIPVVSIGNLTAGGTGKTPLVDWVLKYYLSIGCRPAVVSRGYGRRSKGVQLVSDGRNILLGSTRSGDETAMLAANNPEAVVVVAEQRSEGVQFIMERFRGERPDVIILDDAFQHRQLARDLDIVVINSREPFAAAKMLPEGRLREPKSGIGRADVAVLSKITDESKADAIEAELTGSVALVARTRVVIGELSPFGPKGRSTAPHPDPAGLKALAFAGIASPASFVESLMKKGVHVVEQRFFRDHEPYTLNNFLPLVEEARRKGLTLVTTEKDRYRLEGEPGLLEKTEGVGCCCLNIATGFTRGAEKLQEMLKAVVRD.

Thr49–Thr56 contacts ATP.

Belongs to the LpxK family.

The catalysed reaction is a lipid A disaccharide + ATP = a lipid IVA + ADP + H(+). It functions in the pathway glycolipid biosynthesis; lipid IV(A) biosynthesis; lipid IV(A) from (3R)-3-hydroxytetradecanoyl-[acyl-carrier-protein] and UDP-N-acetyl-alpha-D-glucosamine: step 6/6. Its function is as follows. Transfers the gamma-phosphate of ATP to the 4'-position of a tetraacyldisaccharide 1-phosphate intermediate (termed DS-1-P) to form tetraacyldisaccharide 1,4'-bis-phosphate (lipid IVA). The protein is Tetraacyldisaccharide 4'-kinase of Chlorobium luteolum (strain DSM 273 / BCRC 81028 / 2530) (Pelodictyon luteolum).